The chain runs to 139 residues: Endoribonuclease YbeY (139 aa).

Residues H99, H103, and H109 each contribute to the Zn(2+) site.

It belongs to the endoribonuclease YbeY family. It depends on Zn(2+) as a cofactor.

It is found in the cytoplasm. In terms of biological role, single strand-specific metallo-endoribonuclease involved in late-stage 70S ribosome quality control and in maturation of the 3' terminus of the 16S rRNA. This chain is Endoribonuclease YbeY, found in Nautilia profundicola (strain ATCC BAA-1463 / DSM 18972 / AmH).